Reading from the N-terminus, the 242-residue chain is Uridylate kinase (242 aa).

Lys-15 to Gly-18 is an ATP binding site. The interval Gly-23–Gly-28 is involved in allosteric activation by GTP. A UMP-binding site is contributed by Gly-57. Gly-58 and Arg-62 together coordinate ATP. UMP-binding positions include Asp-77 and Thr-138 to Thr-145. Positions 165, 171, and 174 each coordinate ATP.

It belongs to the UMP kinase family. In terms of assembly, homohexamer.

The protein resides in the cytoplasm. The catalysed reaction is UMP + ATP = UDP + ADP. It functions in the pathway pyrimidine metabolism; CTP biosynthesis via de novo pathway; UDP from UMP (UMPK route): step 1/1. Its activity is regulated as follows. Allosterically activated by GTP. Inhibited by UTP. Catalyzes the reversible phosphorylation of UMP to UDP. This is Uridylate kinase from Photorhabdus laumondii subsp. laumondii (strain DSM 15139 / CIP 105565 / TT01) (Photorhabdus luminescens subsp. laumondii).